The primary structure comprises 254 residues: MAVITMKSLLEAGVHFGHQVKRLDPRMKRFIFSERNEIHILDLQKTLQGIKDSYELVQSVIKNGKKVLFVGTKKQASEIIEQEAKRSEMPYVNNRWLGGMLSNFNTIKKSVQKLKKLEKMEVDGTFEMISKKEVSQINREKLKLAKNLTGIKDMEELPGAIFIIDPKREQIVINEARKLGIPIIAVVDTNCNPDVIDCPIPGNDDAIRSVALFTKIISDAILESDKEVGIQIVENLNEEDLMSEIEVKNERKES.

The protein belongs to the universal ribosomal protein uS2 family.

The protein is Small ribosomal subunit protein uS2 of Borrelia duttonii (strain Ly).